A 319-amino-acid polypeptide reads, in one-letter code: Guanidinobutyrase (319 aa).

Mn(2+)-binding residues include histidine 129, aspartate 152, histidine 154, aspartate 156, aspartate 243, and aspartate 245.

This sequence belongs to the arginase family. Agmatinase subfamily. In terms of assembly, homohexamer. The cofactor is Mn(2+).

The catalysed reaction is 4-guanidinobutanoate + H2O = urea + 4-aminobutanoate. In terms of biological role, catalyzes specifically the hydrolysis of 4-guanidinobutanoate to 4-aminobutanoate and urea. Has no activity against arginine, agmatine, 3-guanidinopropionate and guanidinoacetate. The sequence is that of Guanidinobutyrase (gbuA) from Pseudomonas aeruginosa (strain ATCC 15692 / DSM 22644 / CIP 104116 / JCM 14847 / LMG 12228 / 1C / PRS 101 / PAO1).